The chain runs to 111 residues: Protein BEX3 (111 aa).

Positions 1–63 are disordered; sequence MANIHQENEE…RQINDGMGGD (63 aa). The segment at 68-93 is interaction with p75NTR/NGFR; the sequence is EIFMEEMREIRRKLRELQLRNCLRIL. Residues 68-111 are interaction with 14-3-3 epsilon; sequence EIFMEEMREIRRKLRELQLRNCLRILMGELSNHHDHHDEFCLMP. The short motif at 77–87 is the Nuclear export signal element; it reads IRRKLRELQLR. The interval 100–104 is his cluster; it reads HHDHH. Cysteine 108 is a binding site for Zn(2+).

The protein belongs to the BEX family. Self-associates. Binds to the DEATH domain of p75NTR/NGFR. Interacts with 14-3-3 epsilon (YWHAE). Interacts with DIABLO/SMAC. In terms of processing, ubiquitinated. Degraded by the proteasome. As to expression, found in ovarian granulosa cells, testis, prostate and seminal vesicle tissue. High levels also detected in liver.

Its subcellular location is the nucleus. It is found in the cytoplasm. The protein resides in the cytosol. May be a signaling adapter molecule involved in NGFR/p75NTR-mediated apoptosis induced by NGF. Plays a role in zinc-triggered neuronal death. In absence of reductive stress, acts as a pseudosubstrate for the CRL2(FEM1B) complex: associates with FEM1B via zinc, thereby preventing association between FEM1B and its substrates. The chain is Protein BEX3 from Homo sapiens (Human).